We begin with the raw amino-acid sequence, 446 residues long: RUN domain-containing protein 3A (446 aa).

An interaction with RAP2A region spans residues 1 to 298; it reads MEASFVQTTM…LQLQLEEAAA (298 aa). An RUN domain is found at 52–189; sequence DDSSEEFVNF…IDFSFCLKGE (138 aa). Thr-215 carries the post-translational modification Phosphothreonine. A disordered region spans residues 216-239; it reads DEEERHSAESSTSEDNSPEHPYLP. The residue at position 232 (Ser-232) is a Phosphoserine. Residues 267 to 322 adopt a coiled-coil conformation; it reads YLEELVRLRESQLKDLEAENRRLQLQLEEAAAQNQREKRELEGVILELQEQLTGLI. Positions 372 to 384 are enriched in polar residues; it reads PLSAEASLSSDSQ. The segment at 372–404 is disordered; that stretch reads PLSAEASLSSDSQRLGEGTRDEEPWGPIGKDPT. Residues Ser-416 and Ser-419 each carry the phosphoserine modification.

It belongs to the RUNDC3 family. Interacts with the GTP-bound form of RAP2A.

In terms of biological role, may act as an effector of RAP2A in neuronal cells. This Homo sapiens (Human) protein is RUN domain-containing protein 3A (RUNDC3A).